Here is a 281-residue protein sequence, read N- to C-terminus: 4-diphosphocytidyl-2-C-methyl-D-erythritol kinase (281 aa).

Lysine 11 is an active-site residue. 92–102 provides a ligand contact to ATP; it reads LVSAGLAGGSA. Aspartate 132 is an active-site residue.

This sequence belongs to the GHMP kinase family. IspE subfamily.

It carries out the reaction 4-CDP-2-C-methyl-D-erythritol + ATP = 4-CDP-2-C-methyl-D-erythritol 2-phosphate + ADP + H(+). Its pathway is isoprenoid biosynthesis; isopentenyl diphosphate biosynthesis via DXP pathway; isopentenyl diphosphate from 1-deoxy-D-xylulose 5-phosphate: step 3/6. Its function is as follows. Catalyzes the phosphorylation of the position 2 hydroxy group of 4-diphosphocytidyl-2C-methyl-D-erythritol. The protein is 4-diphosphocytidyl-2-C-methyl-D-erythritol kinase of Ehrlichia ruminantium (strain Gardel).